The sequence spans 456 residues: Divalent metal cation transporter MntH (456 aa).

11 helical membrane passes run 47 to 67 (ALSF…PGNW), 77 to 97 (FGYA…LLQA), 123 to 143 (AWPL…AEVI), 151 to 171 (LLFG…VLLV), 184 to 204 (ALII…IIMA), 227 to 247 (MLYI…LYLH), 276 to 296 (IALT…AASF), 316 to 336 (PLLG…CCGL), 369 to 389 (FVAI…GTTE), 392 to 412 (ILSQ…LVIF), and 422 to 442 (LAAA…IVVL).

It belongs to the NRAMP family.

It is found in the cell inner membrane. Its function is as follows. H(+)-stimulated, divalent metal cation uptake system. This Brucella suis biovar 1 (strain 1330) protein is Divalent metal cation transporter MntH.